The following is a 551-amino-acid chain: Harmonin (551 aa).

Residues 1–86 (MDRKVAREFR…LTPRRSRKLK (86 aa)) form an N-terminal domain region. PDZ domains are found at residues 87–169 (EVRL…HIGL) and 211–293 (KVFI…AGAG). The tract at residues 194–532 (GGRSSLGSPG…QKAWNQGDWI (339 aa)) is mediates interaction with MYO7B. Ser219 carries the post-translational modification Phosphoserine. Residues 318-377 (LMQKRLAMESNKILQEQQEMERQRKKEIAQKAAEENERYRKEMEQIVEEEEKFRKQWEED) are a coiled coil. The segment at 401–425 (KPKYDLGVDPEFDPADDLDGGTNKR) is disordered. Positions 408–419 (VDPEFDPADDLD) are enriched in acidic residues. Residues 452 to 536 (DVRLLRVKKE…NQGDWIDLVV (85 aa)) enclose the PDZ 3 domain.

Part of the IMAC/intermicrovillar adhesion complex/intermicrovillar tip-link complex composed of ANKS4B, MYO7B, USH1C, CDHR2 and CDHR5. Part of a complex composed of USH1C, USH1G and MYO7A. Interacts with F-actin. Interacts with USH2A. Interacts with SLC4A7. Interacts (via PDZ1 domain) with the C-terminus of USHBP1. Interacts (via N-terminus and PDZ 2 domain) with CDH23. Interacts with USH1G. Interacts with MYO7B. Interacts with CDHR2 and CDHR5; may mediate their interaction with MYO7B at the microvilli tip. Interacts (via PDZ 1 domain) with ANKS4B. Interacts (via PDZ 1 domain) with DOCK4.

The protein localises to the cytoplasm. It localises to the cytosol. Its subcellular location is the cytoskeleton. It is found in the cell projection. The protein resides in the microvillus. Anchoring/scaffolding protein that is a part of the functional network formed by USH1C, USH1G, CDH23 and MYO7A that mediates mechanotransduction in cochlear hair cells. Required for normal development and maintenance of cochlear hair cell bundles. As part of the intermicrovillar adhesion complex/IMAC plays a role in brush border differentiation, controlling microvilli organization and length. Probably plays a central regulatory role in the assembly of the complex, recruiting CDHR2, CDHR5 and MYO7B to the microvilli tips. The sequence is that of Harmonin (USH1C) from Bos taurus (Bovine).